The chain runs to 119 residues: Ribonuclease P protein component (119 aa).

It belongs to the RnpA family. Consists of a catalytic RNA component (M1 or rnpB) and a protein subunit.

The catalysed reaction is Endonucleolytic cleavage of RNA, removing 5'-extranucleotides from tRNA precursor.. Functionally, RNaseP catalyzes the removal of the 5'-leader sequence from pre-tRNA to produce the mature 5'-terminus. It can also cleave other RNA substrates such as 4.5S RNA. The protein component plays an auxiliary but essential role in vivo by binding to the 5'-leader sequence and broadening the substrate specificity of the ribozyme. The chain is Ribonuclease P protein component from Bacillus cereus (strain ATCC 14579 / DSM 31 / CCUG 7414 / JCM 2152 / NBRC 15305 / NCIMB 9373 / NCTC 2599 / NRRL B-3711).